The following is a 232-amino-acid chain: MSPDTEEQTGLTIYLYPVIAWIILVTKIESGLRTRTFPVVHGDEGNNLIPLPEDVKNIRIVQSWPDTFLAKATVGAETIDMGIHVSPDVEALKKEAIELIKHKGSLRKAKKDAERESIVSGWFQSKFQSELLNLKKGWRIRGIVRAESPESKTLFNIELIKRVERRKDASHLRSGVFTPYQKSRIEDIPLSQRKIEPGEVDVPIPYDGIYRIAISPNVKTTYFVELFVEKGS.

Residues 10 to 32 form a helical membrane-spanning segment; it reads GLTIYLYPVIAWIILVTKIESGL.

The protein resides in the membrane. This is an uncharacterized protein from Archaeoglobus fulgidus (strain ATCC 49558 / DSM 4304 / JCM 9628 / NBRC 100126 / VC-16).